The chain runs to 451 residues: Chromosomal replication initiator protein DnaA (451 aa).

The interval 1-77 (MTENEQIFWN…EVYNAQISVD (77 aa)) is domain I, interacts with DnaA modulators. Residues 77–110 (DYVFEEDLMIEQNQTKINQKPKQQALNSLPTVTS) are domain II. The tract at residues 111–329 (DLNSKYSFEN…GALKDISLVA (219 aa)) is domain III, AAA+ region. Residues Gly155, Gly157, Lys158, and Thr159 each contribute to the ATP site. The segment at 330–451 (NFKQIDTITV…EIETIKNKIK (122 aa)) is domain IV, binds dsDNA.

Belongs to the DnaA family. As to quaternary structure, oligomerizes as a right-handed, spiral filament on DNA at oriC.

It is found in the cytoplasm. Functionally, plays an essential role in the initiation and regulation of chromosomal replication. ATP-DnaA binds to the origin of replication (oriC) to initiate formation of the DNA replication initiation complex once per cell cycle. Binds the DnaA box (a 9 base pair repeat at the origin) and separates the double-stranded (ds)DNA. Forms a right-handed helical filament on oriC DNA; dsDNA binds to the exterior of the filament while single-stranded (ss)DNA is stabiized in the filament's interior. The ATP-DnaA-oriC complex binds and stabilizes one strand of the AT-rich DNA unwinding element (DUE), permitting loading of DNA polymerase. After initiation quickly degrades to an ADP-DnaA complex that is not apt for DNA replication. Binds acidic phospholipids. Its function is as follows. The half-life of ATP-DnaA is 12 minutes at 37 degrees Celsius, in E.coli the half-life is about 41 minutes. In Streptococcus pyogenes serotype M1, this protein is Chromosomal replication initiator protein DnaA.